We begin with the raw amino-acid sequence, 213 residues long: ATP-dependent Clp protease proteolytic subunit 1 (213 aa).

The active-site Nucleophile is the Ser114. The active site involves His139.

It belongs to the peptidase S14 family. Fourteen ClpP subunits assemble into 2 heptameric rings which stack back to back to give a disk-like structure with a central cavity, resembling the structure of eukaryotic proteasomes.

It is found in the cytoplasm. The enzyme catalyses Hydrolysis of proteins to small peptides in the presence of ATP and magnesium. alpha-casein is the usual test substrate. In the absence of ATP, only oligopeptides shorter than five residues are hydrolyzed (such as succinyl-Leu-Tyr-|-NHMec, and Leu-Tyr-Leu-|-Tyr-Trp, in which cleavage of the -Tyr-|-Leu- and -Tyr-|-Trp bonds also occurs).. Functionally, cleaves peptides in various proteins in a process that requires ATP hydrolysis. Has a chymotrypsin-like activity. Plays a major role in the degradation of misfolded proteins. This chain is ATP-dependent Clp protease proteolytic subunit 1, found in Pseudomonas aeruginosa (strain ATCC 15692 / DSM 22644 / CIP 104116 / JCM 14847 / LMG 12228 / 1C / PRS 101 / PAO1).